The sequence spans 338 residues: Holliday junction branch migration complex subunit RuvB (338 aa).

Residues 1-22 (MIEADRLIHAEPQGPEERDEQI) are disordered. The large ATPase domain (RuvB-L) stretch occupies residues 4 to 187 (ADRLIHAEPQ…FGIPLRLEFY (184 aa)). Residues arginine 27, glycine 68, lysine 71, threonine 72, threonine 73, 134–136 (EDY), arginine 177, tyrosine 187, and arginine 224 each bind ATP. Position 72 (threonine 72) interacts with Mg(2+). The small ATPAse domain (RuvB-S) stretch occupies residues 188 to 258 (NTKDLSSIVS…VADLALDMLD (71 aa)). Residues 261–338 (SEGFDYMDRK…RHFDIIQPEK (78 aa)) form a head domain (RuvB-H) region. DNA-binding residues include arginine 297, arginine 316, and arginine 321.

The protein belongs to the RuvB family. Homohexamer. Forms an RuvA(8)-RuvB(12)-Holliday junction (HJ) complex. HJ DNA is sandwiched between 2 RuvA tetramers; dsDNA enters through RuvA and exits via RuvB. An RuvB hexamer assembles on each DNA strand where it exits the tetramer. Each RuvB hexamer is contacted by two RuvA subunits (via domain III) on 2 adjacent RuvB subunits; this complex drives branch migration. In the full resolvosome a probable DNA-RuvA(4)-RuvB(12)-RuvC(2) complex forms which resolves the HJ.

Its subcellular location is the cytoplasm. It carries out the reaction ATP + H2O = ADP + phosphate + H(+). Functionally, the RuvA-RuvB-RuvC complex processes Holliday junction (HJ) DNA during genetic recombination and DNA repair, while the RuvA-RuvB complex plays an important role in the rescue of blocked DNA replication forks via replication fork reversal (RFR). RuvA specifically binds to HJ cruciform DNA, conferring on it an open structure. The RuvB hexamer acts as an ATP-dependent pump, pulling dsDNA into and through the RuvAB complex. RuvB forms 2 homohexamers on either side of HJ DNA bound by 1 or 2 RuvA tetramers; 4 subunits per hexamer contact DNA at a time. Coordinated motions by a converter formed by DNA-disengaged RuvB subunits stimulates ATP hydrolysis and nucleotide exchange. Immobilization of the converter enables RuvB to convert the ATP-contained energy into a lever motion, pulling 2 nucleotides of DNA out of the RuvA tetramer per ATP hydrolyzed, thus driving DNA branch migration. The RuvB motors rotate together with the DNA substrate, which together with the progressing nucleotide cycle form the mechanistic basis for DNA recombination by continuous HJ branch migration. Branch migration allows RuvC to scan DNA until it finds its consensus sequence, where it cleaves and resolves cruciform DNA. The sequence is that of Holliday junction branch migration complex subunit RuvB from Shewanella sediminis (strain HAW-EB3).